The sequence spans 408 residues: RNA exonuclease 4 (408 aa).

The segment at 27–70 is disordered; the sequence is TKEKDVSNSKAHNSRSSQSPSSSLRSSSRIQRKSKHSQGVGQYM. The span at 40-55 shows a compositional bias: low complexity; it reads SRSSQSPSSSLRSSSR. The 162-residue stretch at 131-292 folds into the Exonuclease domain; the sequence is QYLAIDCEMV…YRLHKKEWER (162 aa). The span at 310-322 shows a compositional bias: basic and acidic residues; that stretch reads PEHVLGKRGHDEK. Positions 310-408 are disordered; that stretch reads PEHVLGKRGH…GESWWEQPAA (99 aa). Over residues 343 to 357 the composition is skewed to gly residues; the sequence is GNGGGRQQFPGGGRK. Basic and acidic residues predominate over residues 372–384; it reads QRVDENGRGDGTS.

Belongs to the REXO4 family.

Its subcellular location is the nucleus. Its function is as follows. Exoribonuclease involved in ribosome biosynthesis. Involved in the processing of ITS1, the internal transcribed spacer localized between the 18S and 5.8S rRNAs. The sequence is that of RNA exonuclease 4 (REX4) from Cryptococcus neoformans var. neoformans serotype D (strain B-3501A) (Filobasidiella neoformans).